A 741-amino-acid polypeptide reads, in one-letter code: Probable basic-leucine zipper transcription factor I (741 aa).

The stretch at 77-117 forms a coiled coil; sequence QIIEQIQFLQQQQQQQHDQIQQQLHNFQQQYQQQYQQRQQQ. Composition is skewed to low complexity over residues 153–164, 172–237, 277–290, and 381–390; these read QQPPQSLQQQQQ, PQQQ…QIQK, IQQQQLPPQTIQQK, and QQQQQQQQQQ. 3 disordered regions span residues 153-237, 277-305, and 349-390; these read QQPP…QIQK, IQQQQLPPQTIQQKEINKKNQSKQSSNSM, and KQKE…QQQQ. The bZIP domain maps to 429-492; the sequence is ESKKSIKRIN…HEGGTMAILK (64 aa). The basic motif stretch occupies residues 431 to 432; sequence KK. A leucine-zipper region spans residues 434 to 441; sequence IKRINQNI.

Belongs to the bZIP family.

Its subcellular location is the nucleus. Its function is as follows. Probable transcriptional regulator. The sequence is that of Probable basic-leucine zipper transcription factor I (bzpI) from Dictyostelium discoideum (Social amoeba).